A 346-amino-acid chain; its full sequence is [LysW]-lysine/[LysW]-ornithine hydrolase (346 aa).

Histidine 68 contacts Zn(2+). Residue aspartate 70 is part of the active site. Aspartate 92 is a binding site for Zn(2+). Glutamate 122 functions as the Proton acceptor in the catalytic mechanism. The Zn(2+) site is built by glutamate 123, glutamate 146, and histidine 317.

Belongs to the peptidase M20A family. LysK subfamily. It depends on Zn(2+) as a cofactor. The cofactor is Co(2+).

Its subcellular location is the cytoplasm. The enzyme catalyses [amino-group carrier protein]-C-terminal-gamma-(L-lysyl)-L-glutamate + H2O = [amino-group carrier protein]-C-terminal-L-glutamate + L-lysine. It carries out the reaction [amino-group carrier protein]-C-terminal-gamma-(L-ornithyl)-L-glutamate + H2O = [amino-group carrier protein]-C-terminal-L-glutamate + L-ornithine. It functions in the pathway amino-acid biosynthesis; L-lysine biosynthesis via AAA pathway; L-lysine from L-alpha-aminoadipate (Thermus route): step 5/5. Its pathway is amino-acid biosynthesis; L-arginine biosynthesis. Its function is as follows. Catalyzes the release of L-lysine from [LysW]-gamma-L-lysine and the release of L-ornithine from [LysW]-L-ornithine. This chain is [LysW]-lysine/[LysW]-ornithine hydrolase, found in Saccharolobus islandicus (strain Y.G.57.14 / Yellowstone #1) (Sulfolobus islandicus).